The primary structure comprises 384 residues: Cobalt-precorrin-5B C(1)-methyltransferase (384 aa).

Belongs to the CbiD family.

The enzyme catalyses Co-precorrin-5B + S-adenosyl-L-methionine = Co-precorrin-6A + S-adenosyl-L-homocysteine. It functions in the pathway cofactor biosynthesis; adenosylcobalamin biosynthesis; cob(II)yrinate a,c-diamide from sirohydrochlorin (anaerobic route): step 6/10. Functionally, catalyzes the methylation of C-1 in cobalt-precorrin-5B to form cobalt-precorrin-6A. In Ruminiclostridium cellulolyticum (strain ATCC 35319 / DSM 5812 / JCM 6584 / H10) (Clostridium cellulolyticum), this protein is Cobalt-precorrin-5B C(1)-methyltransferase.